A 488-amino-acid polypeptide reads, in one-letter code: MATANTSSGSMNGVGPVTMDSSTSGASREARIATHSHIKGLGLSDDGTALPSAQGFVGQKAAREACGLVLDLIRMKKFAGKALLLAGGPGTGKTALALAVSQELGHKVPFCPMVGSEVYSSEVKKTEVLMENFRRAIGLRVRETKEVYEGEITELTPTEAENPLSGYGKTIAHVVIALKTVKGTKQLRLDPSIYESIMKERISVGDVIYIEANTGAVKRVGRSDAYATEFDLEAEEYVPLPKGEVHKRKEVVQDVTLHDLDMANAKPQGGQDIMSVVGQLVKGRRTEVTDKLRGEINRVVDKYIEQGIAELVPGVLFIDEVHMLDMECFTYLNRALESTISPHVILATNRGQCMVRGTEYEGPASGTGIVAPHGIPLDLLDRCMIVRTMPYEKDEIREVLRLRAKVEGHLIAEDALEKLTEEGVSSSLRFALQLLSPSSILAKTAGRSEITIKDIVEANELFIDARRSAKVLMSIGEATTEAVPMETS.

The span at 1-11 (MATANTSSGSM) shows a compositional bias: polar residues. Positions 1-29 (MATANTSSGSMNGVGPVTMDSSTSGASRE) are disordered. 87–94 (GGPGTGKT) is a binding site for ATP.

Belongs to the RuvB family. As to quaternary structure, may form heterododecamers with RVB2. Component of the SWR1 chromatin remodeling complex, the INO80 chromatin remodeling complex, and of the R2TP complex.

The protein resides in the nucleus. It carries out the reaction ATP + H2O = ADP + phosphate + H(+). In terms of biological role, DNA helicase which participates in several chromatin remodeling complexes, including the SWR1 and the INO80 complexes. The SWR1 complex mediates the ATP-dependent exchange of histone H2A for the H2A variant HZT1 leading to transcriptional regulation of selected genes by chromatin remodeling. The INO80 complex remodels chromatin by shifting nucleosomes and is involved in DNA repair. Also involved in pre-rRNA processing. The chain is RuvB-like helicase 1 (RVB1) from Mycosarcoma maydis (Corn smut fungus).